The following is a 345-amino-acid chain: Protein RecA (345 aa).

65–72 is a binding site for ATP; it reads GPESSGKT.

It belongs to the RecA family.

Its subcellular location is the cytoplasm. In terms of biological role, can catalyze the hydrolysis of ATP in the presence of single-stranded DNA, the ATP-dependent uptake of single-stranded DNA by duplex DNA, and the ATP-dependent hybridization of homologous single-stranded DNAs. It interacts with LexA causing its activation and leading to its autocatalytic cleavage. The polypeptide is Protein RecA (Colwellia psychrerythraea (strain 34H / ATCC BAA-681) (Vibrio psychroerythus)).